Here is a 286-residue protein sequence, read N- to C-terminus: Bifunctional protein FolD 2 (286 aa).

NADP(+)-binding positions include 165–167 (GRG), Thr-192, and Ile-233.

This sequence belongs to the tetrahydrofolate dehydrogenase/cyclohydrolase family. Homodimer.

It carries out the reaction (6R)-5,10-methylene-5,6,7,8-tetrahydrofolate + NADP(+) = (6R)-5,10-methenyltetrahydrofolate + NADPH. The enzyme catalyses (6R)-5,10-methenyltetrahydrofolate + H2O = (6R)-10-formyltetrahydrofolate + H(+). It participates in one-carbon metabolism; tetrahydrofolate interconversion. Its function is as follows. Catalyzes the oxidation of 5,10-methylenetetrahydrofolate to 5,10-methenyltetrahydrofolate and then the hydrolysis of 5,10-methenyltetrahydrofolate to 10-formyltetrahydrofolate. The protein is Bifunctional protein FolD 2 of Salinispora tropica (strain ATCC BAA-916 / DSM 44818 / JCM 13857 / NBRC 105044 / CNB-440).